The sequence spans 395 residues: MSKIIAINAGSSSLKFQLFEMPSEKVLTKGLVERIGIADSVFTISVNGEKNTEVTDIPDHAVAVKMLLHKLTEFGIIKDLNEIDGIGHRVVHGGEKFSDSVLLTDETIREIEEISELAPLHNPANIVGIKAFKEVLPNVPAVAVFDTAFHQTMPEQSYLYSLPYEYYEKYGIRKYGFHGTSHKYVTQRAAELLGRPLEDLRLISCHLGNGASIAAVEGGKSIDTSMGFTPLAGVAMGTRSGNIDPALIPYIMEKTDQTADEVLNTLNKKSGLLGVSGFSSDLRDIVEASKEGNERAETALEVFASRIHKYIGSYAARMSGVDAIIFTAGIGENSVEVRERVLRGLEFMGVYWDPALNNVRGEEAFISYPHSPVKVMIIPTDEEVMIARDVVRLAQ.

N8 contacts Mg(2+). Residue K15 participates in ATP binding. Position 89 (R89) interacts with substrate. D146 functions as the Proton donor/acceptor in the catalytic mechanism. Residues 206–210 (HLGNG), 281–283 (DLR), and 329–333 (GIGEN) each bind ATP. E382 contacts Mg(2+).

Belongs to the acetokinase family. As to quaternary structure, homodimer. Requires Mg(2+) as cofactor. Mn(2+) is required as a cofactor.

It localises to the cytoplasm. The enzyme catalyses acetate + ATP = acetyl phosphate + ADP. The protein operates within metabolic intermediate biosynthesis; acetyl-CoA biosynthesis; acetyl-CoA from acetate: step 1/2. Catalyzes the formation of acetyl phosphate from acetate and ATP. Can also catalyze the reverse reaction. The chain is Acetate kinase from Bacillus velezensis (strain DSM 23117 / BGSC 10A6 / LMG 26770 / FZB42) (Bacillus amyloliquefaciens subsp. plantarum).